The primary structure comprises 387 residues: Protein-glutamate methylesterase/protein-glutamine glutaminase 1 (387 aa).

The Response regulatory domain maps to 18-136 (RVMVVDDSAV…EISGGTDFRH (119 aa)). Position 69 is a 4-aspartylphosphate (aspartate 69). Residues 190–387 (PAAEERPDII…AYVLRSANKR (198 aa)) form the CheB-type methylesterase domain. Residues serine 204, histidine 233, and aspartate 329 contribute to the active site.

Belongs to the CheB family. In terms of processing, phosphorylated by CheA. Phosphorylation of the N-terminal regulatory domain activates the methylesterase activity.

The protein resides in the cytoplasm. The enzyme catalyses [protein]-L-glutamate 5-O-methyl ester + H2O = L-glutamyl-[protein] + methanol + H(+). It catalyses the reaction L-glutaminyl-[protein] + H2O = L-glutamyl-[protein] + NH4(+). In terms of biological role, involved in chemotaxis. Part of a chemotaxis signal transduction system that modulates chemotaxis in response to various stimuli. Catalyzes the demethylation of specific methylglutamate residues introduced into the chemoreceptors (methyl-accepting chemotaxis proteins or MCP) by CheR. Also mediates the irreversible deamidation of specific glutamine residues to glutamic acid. This is Protein-glutamate methylesterase/protein-glutamine glutaminase 1 from Rhodospirillum rubrum (strain ATCC 11170 / ATH 1.1.1 / DSM 467 / LMG 4362 / NCIMB 8255 / S1).